A 1135-amino-acid chain; its full sequence is LRR receptor-like serine/threonine-protein kinase RGI2 (1135 aa).

The signal sequence occupies residues 1-35 (MSLQMPIPRKKALTVSHFSITLSLFLAFFISSTSA). The Extracellular portion of the chain corresponds to 36-723 (STNEVSALIS…QRGVHSHRLR (688 aa)). A disulfide bridge connects residues C69 and C76. Residues N101 and N117 are each glycosylated (N-linked (GlcNAc...) asparagine). LRR repeat units lie at residues 105 to 129 (FTSL…IGDC), 130 to 153 (SELI…LGKL), 154 to 177 (KNLQ…LGDC), and 179 to 203 (SLKN…KIST). Short sequence motifs (small peptide recognition) lie at residues 186-187 (FD), 208-211 (RAGG), 231-236 (VLGLAA), and Y259. 19 LRR repeats span residues 226-250 (CRNL…LGQL), 251-274 (SKLQ…LGNC), 276-298 (ELIN…LGKL), 299-323 (QNLE…GFMK), 325-345 (LNAI…SFGN), 346-370 (LSNL…LSNC), 372-395 (KLVQ…GLLK), 397-418 (LNIF…LAGC), 419-442 (QNLQ…LFQL), 444-466 (NLTK…IGNC), 467-490 (TSLV…IGFL), 491-514 (QNLS…ISNC), 516-538 (QLQM…LSSL), 539-562 (TKLQ…LGHL), 564-586 (SLNR…LGHC), 587-610 (TNLQ…LFDI), 612-634 (DLDI…RISA), 635-658 (LNRL…LSGL), and 659-683 (ENLV…VFRQ). N273 carries N-linked (GlcNAc...) asparagine glycosylation. Positions 281 to 283 (FLY) match the Small peptide recognition motif. The short motif at 329–332 (DLSM) is the Small peptide recognition element. The N-linked (GlcNAc...) asparagine glycan is linked to N345. Residues 351–353 (ELM) carry the Small peptide recognition motif. N358 and N369 each carry an N-linked (GlcNAc...) asparagine glycan. 2 short sequence motifs (small peptide recognition) span residues 399–403 (IFLGW) and 425–428 (DLSQ). The N-linked (GlcNAc...) asparagine glycan is linked to N444. A Small peptide recognition motif is present at residues 447–451 (KLLLI). N465 carries N-linked (GlcNAc...) asparagine glycosylation. The Small peptide recognition motif lies at 471 to 473 (RLR). N-linked (GlcNAc...) asparagine glycans are attached at residues N492, N502, N521, and N524. Residues N598 and N618 are each glycosylated (N-linked (GlcNAc...) asparagine). N665 and N707 each carry an N-linked (GlcNAc...) asparagine glycan. The chain crosses the membrane as a helical span at residues 724 to 744 (IAIGLLISVTAVLAVLGVLAV). At 745–1135 (IRAKQMIRDD…ATSNVRPNLK (391 aa)) the chain is on the cytoplasmic side. T777 carries the phosphothreonine modification. Positions 785-1066 (LVEGNVIGKG…KDVAAMLSEI (282 aa)) constitute a Protein kinase domain. ATP is bound by residues 791-799 (IGKGCSGIV) and K813. 2 positions are modified to phosphotyrosine: Y868 and Y907. The Proton acceptor role is filled by D920. Phosphotyrosine is present on residues Y963 and Y970. The interval 1077 to 1135 (DGCSGSCNNGRERGKDDSTSSVMQQTAKYLRSSSTSFSASSLLYSSSSSATSNVRPNLK) is disordered. The segment covering 1108–1128 (SSSTSFSASSLLYSSSSSATS) has biased composition (low complexity).

Belongs to the protein kinase superfamily. Ser/Thr protein kinase family. As to quaternary structure, binds to RGF peptides such as RGF1, GLV5/CLEL1/RGF2, GLV7/CLEL3/RGF3, GLV3/RGF4, GLV10/CLEL7/RGF5 and RGF10/CLELN; these interactions trigger the formation of heterodimers with SERK1. Interacts with UBP13. Phosphorylated and ubiquitinated upon interaction with RGF1, thus leading to activation a subsequent degradation. Stabilized by UBP12 and UBP13-mediated deubiquitination. In terms of processing, autophosphorylated. In terms of tissue distribution, specific to root meristems, especially in lateral root meristems (LRM).

It is found in the membrane. The enzyme catalyses L-seryl-[protein] + ATP = O-phospho-L-seryl-[protein] + ADP + H(+). It catalyses the reaction L-threonyl-[protein] + ATP = O-phospho-L-threonyl-[protein] + ADP + H(+). In terms of biological role, together with RGI1, RGI3, RGI4 and RGI5, acts as a receptor of RGF peptides (e.g. RGF1, GLV5/CLEL1/RGF2, GLV7/CLEL3/RGF3, GLV3/RGF4, GLV10/CLEL7/RGF5 and RGF10/CLELN), peptide hormones which maintain the postembryonic root stem cell niche by regulating the expression levels and patterns of the transcription factor PLETHORA (PLT, e.g. PLT1 and PLT2). Links RGF peptides signal with their downstream components. This is LRR receptor-like serine/threonine-protein kinase RGI2 from Arabidopsis thaliana (Mouse-ear cress).